The sequence spans 380 residues: MKDCEYQQISPGAAPPPASPGARRPGPAAPPAPSPGPAPGAPRWSGSGSGSGSLGRRPRRKWEVFPGRNRFYCGGRLMLAGHGGVFALTLLLILSTTILFFVFDCPYLARTLTLAIPIIAAILFFFVMSCLLQTSFTDPGILPRATICEAAALEKQIDNTGSSTYRPPPRTREVMINGQTVKLKYCFTCKMFRPPRTSHCSVCDNCVERFDHHCPWVGNCVGRRNYRFFYAFILSLSFLTAFIFACVVTHLTLLSQGSNFLSALKKTPASVLELVICFFSIWSILGLSGFHTYLVASNLTTNEDIKGSWSSKRGGEASVNPYSHKSIITNCCAVLCGPLPPSLIDRRGFVQSDTALPSPIRSDDPACGAKPDASMVGGHP.

The disordered stretch occupies residues 1–59 (MKDCEYQQISPGAAPPPASPGARRPGPAAPPAPSPGPAPGAPRWSGSGSGSGSLGRRPR). The Cytoplasmic portion of the chain corresponds to 1–82 (MKDCEYQQIS…CGGRLMLAGH (82 aa)). S19 is subject to Phosphoserine. The segment covering 27-40 (PAAPPAPSPGPAPG) has biased composition (pro residues). Residues 83 to 103 (GGVFALTLLLILSTTILFFVF) traverse the membrane as a helical segment. The Lumenal segment spans residues 104-111 (DCPYLART). The chain crosses the membrane as a helical span at residues 112–132 (LTLAIPIIAAILFFFVMSCLL). The Cytoplasmic portion of the chain corresponds to 133-227 (QTSFTDPGIL…GNCVGRRNYR (95 aa)). The DHHC domain maps to 184-234 (KYCFTCKMFRPPRTSHCSVCDNCVERFDHHCPWVGNCVGRRNYRFFYAFIL). Residue C214 is the S-palmitoyl cysteine intermediate of the active site. A helical transmembrane segment spans residues 228 to 248 (FFYAFILSLSFLTAFIFACVV). The Lumenal portion of the chain corresponds to 249 to 269 (THLTLLSQGSNFLSALKKTPA). The helical transmembrane segment at 270-290 (SVLELVICFFSIWSILGLSGF) threads the bilayer. The Cytoplasmic portion of the chain corresponds to 291–380 (HTYLVASNLT…PDASMVGGHP (90 aa)). The segment at 355–380 (ALPSPIRSDDPACGAKPDASMVGGHP) is disordered.

The protein belongs to the DHHC palmitoyltransferase family. ERF2/ZDHHC9 subfamily. In terms of tissue distribution, ubiquitously expressed.

It is found in the golgi apparatus membrane. It carries out the reaction L-cysteinyl-[protein] + hexadecanoyl-CoA = S-hexadecanoyl-L-cysteinyl-[protein] + CoA. In terms of biological role, palmitoyltransferase that catalyzes the addition of palmitate onto various protein substrates, such as CGAS, HRAS and LCK. Palmitoylates HRAS and LCK. Acts as a negative regulator of the cGAS-STING pathway be mediating palmitoylation and inactivation of CGAS. May also have a palmitoyltransferase activity toward the beta-2 adrenergic receptor/ADRB2 and therefore regulate G protein-coupled receptor signaling. The chain is Palmitoyltransferase ZDHHC18 from Mus musculus (Mouse).